A 603-amino-acid polypeptide reads, in one-letter code: Proline--tRNA ligase (603 aa).

The protein belongs to the class-II aminoacyl-tRNA synthetase family. ProS type 1 subfamily. Homodimer.

The protein localises to the cytoplasm. The catalysed reaction is tRNA(Pro) + L-proline + ATP = L-prolyl-tRNA(Pro) + AMP + diphosphate. Its function is as follows. Catalyzes the attachment of proline to tRNA(Pro) in a two-step reaction: proline is first activated by ATP to form Pro-AMP and then transferred to the acceptor end of tRNA(Pro). As ProRS can inadvertently accommodate and process non-cognate amino acids such as alanine and cysteine, to avoid such errors it has two additional distinct editing activities against alanine. One activity is designated as 'pretransfer' editing and involves the tRNA(Pro)-independent hydrolysis of activated Ala-AMP. The other activity is designated 'posttransfer' editing and involves deacylation of mischarged Ala-tRNA(Pro). The misacylated Cys-tRNA(Pro) is not edited by ProRS. The polypeptide is Proline--tRNA ligase (Prochlorococcus marinus (strain SARG / CCMP1375 / SS120)).